Reading from the N-terminus, the 100-residue chain is Thioredoxin (100 aa).

Residues Met-1–Lys-100 enclose the Thioredoxin domain. The cysteines at positions 29 and 32 are disulfide-linked.

The protein belongs to the thioredoxin family.

In terms of biological role, participates in various redox reactions through the reversible oxidation of its active center dithiol to a disulfide and catalyzes dithiol-disulfide exchange reactions. This Mycoplasmoides gallisepticum (strain R(low / passage 15 / clone 2)) (Mycoplasma gallisepticum) protein is Thioredoxin (trxA).